Reading from the N-terminus, the 174-residue chain is Translation initiation factor IF-3 (174 aa).

Belongs to the IF-3 family. Monomer.

It localises to the cytoplasm. In terms of biological role, IF-3 binds to the 30S ribosomal subunit and shifts the equilibrium between 70S ribosomes and their 50S and 30S subunits in favor of the free subunits, thus enhancing the availability of 30S subunits on which protein synthesis initiation begins. The chain is Translation initiation factor IF-3 from Azorhizobium caulinodans (strain ATCC 43989 / DSM 5975 / JCM 20966 / LMG 6465 / NBRC 14845 / NCIMB 13405 / ORS 571).